Consider the following 131-residue polypeptide: Single-stranded DNA-binding protein 1 (131 aa).

Positions 1 to 103 (MYNKVIAIGR…VLCQSFQLLE (103 aa)) constitute an SSB domain.

In terms of assembly, homotetramer.

This Streptococcus pyogenes serotype M6 (strain ATCC BAA-946 / MGAS10394) protein is Single-stranded DNA-binding protein 1 (ssb1).